We begin with the raw amino-acid sequence, 291 residues long: Protease HtpX homolog (291 aa).

2 helical membrane passes run 11–31 (INTF…GLLA) and 34–54 (FLGM…ACVQ). A Zn(2+)-binding site is contributed by histidine 140. The active site involves glutamate 141. Histidine 144 serves as a coordination point for Zn(2+). The next 2 membrane-spanning stretches (helical) occupy residues 155 to 175 (IVFG…RALI) and 186 to 206 (AFSF…AMLV). Glutamate 215 contributes to the Zn(2+) binding site.

This sequence belongs to the peptidase M48B family. The cofactor is Zn(2+).

The protein resides in the cell membrane. In Tropheryma whipplei (strain Twist) (Whipple's bacillus), this protein is Protease HtpX homolog.